Reading from the N-terminus, the 295-residue chain is ATP synthase gamma chain (295 aa).

The protein belongs to the ATPase gamma chain family. F-type ATPases have 2 components, CF(1) - the catalytic core - and CF(0) - the membrane proton channel. CF(1) has five subunits: alpha(3), beta(3), gamma(1), delta(1), epsilon(1). CF(0) has three main subunits: a, b and c.

It is found in the cell membrane. Its function is as follows. Produces ATP from ADP in the presence of a proton gradient across the membrane. The gamma chain is believed to be important in regulating ATPase activity and the flow of protons through the CF(0) complex. The sequence is that of ATP synthase gamma chain from Caldanaerobacter subterraneus subsp. tengcongensis (strain DSM 15242 / JCM 11007 / NBRC 100824 / MB4) (Thermoanaerobacter tengcongensis).